We begin with the raw amino-acid sequence, 159 residues long: Ribosomal RNA large subunit methyltransferase H (159 aa).

S-adenosyl-L-methionine is bound by residues Leu-76, Gly-108, and 127–132 (FGLLTL).

It belongs to the RNA methyltransferase RlmH family. As to quaternary structure, homodimer.

The protein resides in the cytoplasm. The catalysed reaction is pseudouridine(1915) in 23S rRNA + S-adenosyl-L-methionine = N(3)-methylpseudouridine(1915) in 23S rRNA + S-adenosyl-L-homocysteine + H(+). In terms of biological role, specifically methylates the pseudouridine at position 1915 (m3Psi1915) in 23S rRNA. The protein is Ribosomal RNA large subunit methyltransferase H of Streptococcus agalactiae serotype Ia (strain ATCC 27591 / A909 / CDC SS700).